Here is a 380-residue protein sequence, read N- to C-terminus: 3-isopropylmalate dehydratase large subunit (380 aa).

C262, C320, and C323 together coordinate [4Fe-4S] cluster.

Belongs to the aconitase/IPM isomerase family. LeuC type 2 subfamily. Heterodimer of LeuC and LeuD. It depends on [4Fe-4S] cluster as a cofactor.

It carries out the reaction (2R,3S)-3-isopropylmalate = (2S)-2-isopropylmalate. It participates in amino-acid biosynthesis; L-leucine biosynthesis; L-leucine from 3-methyl-2-oxobutanoate: step 2/4. In terms of biological role, catalyzes the isomerization between 2-isopropylmalate and 3-isopropylmalate, via the formation of 2-isopropylmaleate. This is 3-isopropylmalate dehydratase large subunit from Thermococcus kodakarensis (strain ATCC BAA-918 / JCM 12380 / KOD1) (Pyrococcus kodakaraensis (strain KOD1)).